The following is a 1220-amino-acid chain: DNA-directed RNA polymerase subunit beta (1220 aa).

This sequence belongs to the RNA polymerase beta chain family. In terms of assembly, the RNAP catalytic core consists of 2 alpha, 1 beta, 1 beta' and 1 omega subunit. When a sigma factor is associated with the core the holoenzyme is formed, which can initiate transcription.

The catalysed reaction is RNA(n) + a ribonucleoside 5'-triphosphate = RNA(n+1) + diphosphate. DNA-dependent RNA polymerase catalyzes the transcription of DNA into RNA using the four ribonucleoside triphosphates as substrates. The polypeptide is DNA-directed RNA polymerase subunit beta (Mesomycoplasma hyopneumoniae (strain J / ATCC 25934 / NCTC 10110) (Mycoplasma hyopneumoniae)).